The sequence spans 442 residues: Protein bangles and beads (442 aa).

Positions 47-442 (AVEPAPLKPE…SEESSESKEN (396 aa)) are disordered. Basic and acidic residues-rich tracts occupy residues 55 to 67 (PEAE…KTIE), 114 to 125 (PEKKTLPEEAKP), and 133 to 146 (EAEK…RTEA). The segment covering 159–172 (AIEQAPEAPAANAE) has biased composition (low complexity). Composition is skewed to basic and acidic residues over residues 177-194 (VVDE…KSAE) and 204-240 (AEKE…EPAK). Composition is skewed to low complexity over residues 241-255 (AAEA…AATK) and 272-288 (SSPA…AAQA). A compositionally biased stretch (basic and acidic residues) spans 329 to 339 (EAVKEQEKEQP). Residues 357 to 376 (TAAPAGAPEPTAAVAPAAVP) are compositionally biased toward low complexity. The segment covering 408–442 (EPKKSSEEKSDKSESKVDESSESKESEESSESKEN) has biased composition (basic and acidic residues). Ser-430, Ser-433, Ser-436, and Ser-437 each carry phosphoserine.

As to expression, expressed in the embryonic CNS, in sets of cells that are segmentally reiterated along the periphery of the nervous system.

Functionally, may play an important role during development. The protein is Protein bangles and beads (bnb) of Drosophila melanogaster (Fruit fly).